The chain runs to 203 residues: Imidazoleglycerol-phosphate dehydratase (203 aa).

This sequence belongs to the imidazoleglycerol-phosphate dehydratase family.

Its subcellular location is the cytoplasm. The enzyme catalyses D-erythro-1-(imidazol-4-yl)glycerol 3-phosphate = 3-(imidazol-4-yl)-2-oxopropyl phosphate + H2O. The protein operates within amino-acid biosynthesis; L-histidine biosynthesis; L-histidine from 5-phospho-alpha-D-ribose 1-diphosphate: step 6/9. In Parvibaculum lavamentivorans (strain DS-1 / DSM 13023 / NCIMB 13966), this protein is Imidazoleglycerol-phosphate dehydratase.